Consider the following 104-residue polypeptide: Small ribosomal subunit protein uS10 (104 aa).

Belongs to the universal ribosomal protein uS10 family. As to quaternary structure, part of the 30S ribosomal subunit.

In terms of biological role, involved in the binding of tRNA to the ribosomes. This is Small ribosomal subunit protein uS10 from Maricaulis maris (strain MCS10) (Caulobacter maris).